Reading from the N-terminus, the 324-residue chain is Quinolinate synthase (324 aa).

Iminosuccinate-binding residues include His39 and Ser56. Cys101 contacts [4Fe-4S] cluster. Residues 127 to 129 (YIN) and Ser144 each bind iminosuccinate. Cys187 is a [4Fe-4S] cluster binding site. Iminosuccinate-binding positions include 213-215 (HPE) and Thr230. Cys280 contributes to the [4Fe-4S] cluster binding site.

This sequence belongs to the quinolinate synthase family. Type 2 subfamily. [4Fe-4S] cluster serves as cofactor.

It is found in the cytoplasm. The catalysed reaction is iminosuccinate + dihydroxyacetone phosphate = quinolinate + phosphate + 2 H2O + H(+). It functions in the pathway cofactor biosynthesis; NAD(+) biosynthesis; quinolinate from iminoaspartate: step 1/1. Functionally, catalyzes the condensation of iminoaspartate with dihydroxyacetone phosphate to form quinolinate. This chain is Quinolinate synthase, found in Nostoc sp. (strain PCC 7120 / SAG 25.82 / UTEX 2576).